The chain runs to 644 residues: Biosynthetic arginine decarboxylase (644 aa).

At Lys113 the chain carries N6-(pyridoxal phosphate)lysine. 293–303 provides a ligand contact to substrate; it reads FDVGGGLGVDY.

It belongs to the Orn/Lys/Arg decarboxylase class-II family. SpeA subfamily. Requires Mg(2+) as cofactor. It depends on pyridoxal 5'-phosphate as a cofactor.

The enzyme catalyses L-arginine + H(+) = agmatine + CO2. Functionally, catalyzes the biosynthesis of agmatine from arginine. The protein is Biosynthetic arginine decarboxylase of Pasteurella multocida (strain Pm70).